A 187-amino-acid polypeptide reads, in one-letter code: F-box protein At5g41720 (187 aa).

Positions M2–H49 constitute an F-box domain.

The protein is F-box protein At5g41720 of Arabidopsis thaliana (Mouse-ear cress).